A 378-amino-acid polypeptide reads, in one-letter code: Chaperone protein DnaJ (378 aa).

Positions 3 to 67 constitute a J domain; sequence DYYDLLGVSK…QTRGRYDQFG (65 aa). The segment at 133–215 adopts a CR-type zinc-finger fold; sequence GQEREIKIPH…CAGQGVRQVR (83 aa). 8 residues coordinate Zn(2+): Cys146, Cys149, Cys163, Cys166, Cys189, Cys192, Cys203, and Cys206. CXXCXGXG motif repeat units lie at residues 146 to 153, 163 to 170, 189 to 196, and 203 to 210; these read CDTCNGTG, CSTCGGVG, CPSCEGTG, and CPACAGQG.

The protein belongs to the DnaJ family. As to quaternary structure, homodimer. Requires Zn(2+) as cofactor.

The protein localises to the cytoplasm. Its function is as follows. Participates actively in the response to hyperosmotic and heat shock by preventing the aggregation of stress-denatured proteins and by disaggregating proteins, also in an autonomous, DnaK-independent fashion. Unfolded proteins bind initially to DnaJ; upon interaction with the DnaJ-bound protein, DnaK hydrolyzes its bound ATP, resulting in the formation of a stable complex. GrpE releases ADP from DnaK; ATP binding to DnaK triggers the release of the substrate protein, thus completing the reaction cycle. Several rounds of ATP-dependent interactions between DnaJ, DnaK and GrpE are required for fully efficient folding. Also involved, together with DnaK and GrpE, in the DNA replication of plasmids through activation of initiation proteins. The polypeptide is Chaperone protein DnaJ (Prochlorococcus marinus (strain MIT 9313)).